The chain runs to 426 residues: DNA polymerase processivity factor component A20 (426 aa).

It belongs to the poxviruses A20 family. In terms of assembly, interacts with the DNA polymerase catalytic subunit E9. Interacts with UDG. Component of the Uracil-DNA glycosylase(UDG)-A20-polymerase complex; A20 and UDG form a heterodimeric processivity factor that associates with E9 to form the processive polymerase holoenzyme. Interacts with D5.

Functionally, plays an essential role in viral DNA replication by acting as the polymerase processivity factor together with protein D4. May serve as a bridge which links the DNA polymerase E9 and the uracil DNA glycosylase. In Vaccinia virus (strain Ankara) (VACV), this protein is DNA polymerase processivity factor component A20.